Reading from the N-terminus, the 116-residue chain is Large ribosomal subunit protein uL18 (116 aa).

It belongs to the universal ribosomal protein uL18 family. Part of the 50S ribosomal subunit; part of the 5S rRNA/L5/L18/L25 subcomplex. Contacts the 5S and 23S rRNAs.

Its function is as follows. This is one of the proteins that bind and probably mediate the attachment of the 5S RNA into the large ribosomal subunit, where it forms part of the central protuberance. In Acinetobacter baylyi (strain ATCC 33305 / BD413 / ADP1), this protein is Large ribosomal subunit protein uL18.